The following is a 96-amino-acid chain: Small ribosomal subunit protein uS19 (96 aa).

Belongs to the universal ribosomal protein uS19 family.

In terms of biological role, protein S19 forms a complex with S13 that binds strongly to the 16S ribosomal RNA. The protein is Small ribosomal subunit protein uS19 of Gemmatimonas aurantiaca (strain DSM 14586 / JCM 11422 / NBRC 100505 / T-27).